The following is a 190-amino-acid chain: Threonylcarbamoyl-AMP synthase (190 aa).

The region spanning 7–190 is the YrdC-like domain; it reads GDAIAAAIDV…ALTGELFRQG (184 aa).

It belongs to the SUA5 family. TsaC subfamily.

The protein localises to the cytoplasm. It catalyses the reaction L-threonine + hydrogencarbonate + ATP = L-threonylcarbamoyladenylate + diphosphate + H2O. In terms of biological role, required for the formation of a threonylcarbamoyl group on adenosine at position 37 (t(6)A37) in tRNAs that read codons beginning with adenine. Catalyzes the conversion of L-threonine, HCO(3)(-)/CO(2) and ATP to give threonylcarbamoyl-AMP (TC-AMP) as the acyladenylate intermediate, with the release of diphosphate. The sequence is that of Threonylcarbamoyl-AMP synthase from Shigella boydii serotype 4 (strain Sb227).